We begin with the raw amino-acid sequence, 413 residues long: UPF0754 membrane protein PCC7424_0748 (413 aa).

The next 2 membrane-spanning stretches (helical) occupy residues 3–23 and 391–411; these read IALE…GAII and IVNL…VILL.

Belongs to the UPF0754 family.

It is found in the cell inner membrane. This chain is UPF0754 membrane protein PCC7424_0748, found in Gloeothece citriformis (strain PCC 7424) (Cyanothece sp. (strain PCC 7424)).